The chain runs to 129 residues: uncharacterized protein (129 aa).

Belongs to the asfivirus C129R family.

It localises to the virion. Its function is as follows. Plays a role in the inhibition of type I interferon signaling pathway. Mechanistically, specifically interacts with 2',3'-cGAMP and cleaves it via its phosphodiesterase activity. In turn, prevents 2',3'-cGAMP interaction with host ER-resident STING1 leading to inhibition of downstream signaling pathway and type I interferon production. This is an uncharacterized protein from African swine fever virus (strain Badajoz 1971 Vero-adapted) (Ba71V).